A 165-amino-acid chain; its full sequence is Nucleotide-binding protein TGRD_519 (165 aa).

It belongs to the YajQ family.

Its function is as follows. Nucleotide-binding protein. This is Nucleotide-binding protein TGRD_519 from Endomicrobium trichonymphae.